Here is a 763-residue protein sequence, read N- to C-terminus: Phosphoglycerol transferase I (763 aa).

4 consecutive transmembrane segments (helical) span residues 1–21, 26–46, 77–97, and 108–128; these read MSEL…AWKA, WWFA…ITLY, ILPG…LGWI, and VGYS…SPAF.

Belongs to the OpgB family.

Its subcellular location is the cell inner membrane. It catalyses the reaction a phosphatidylglycerol + a membrane-derived-oligosaccharide D-glucose = a 1,2-diacyl-sn-glycerol + a membrane-derived-oligosaccharide 6-(glycerophospho)-D-glucose.. Its pathway is glycan metabolism; osmoregulated periplasmic glucan (OPG) biosynthesis. In terms of biological role, transfers a phosphoglycerol residue from phosphatidylglycerol to the membrane-bound nascent glucan backbones. The polypeptide is Phosphoglycerol transferase I (Salmonella newport (strain SL254)).